The sequence spans 184 residues: H(2)/formate:CoB-CoM heterodisulfide,ferredoxin reductase subunit C2 (184 aa).

4Fe-4S ferredoxin-type domains lie at 24-54 (GEKE…AYRT) and 65-97 (IDSV…TEII). The [4Fe-4S] cluster site is built by C34, C37, C40, C44, C77, C80, C83, and C87.

Belongs to the HdrC family. The heterodisulfide reductase is composed of three subunits; HdrA, HdrB and HdrC. B1 and B2 subunits are interchangeable, as are the C1 and C2 subunits. The heterodisulfide reductase forms a supercomplex with formylmethanofuran dehydrogenase (Fwd), F(420)-non-reducing hydrogenase (Vhu) and formate dehydrogenase (Fdh). [4Fe-4S] cluster is required as a cofactor.

It carries out the reaction coenzyme B + coenzyme M + 2 reduced [2Fe-2S]-[ferredoxin] + 2 H(+) = coenzyme M-coenzyme B heterodisulfide + 2 H2 + 2 oxidized [2Fe-2S]-[ferredoxin]. It catalyses the reaction coenzyme B + coenzyme M + 2 reduced [2Fe-2S]-[ferredoxin] + 2 CO2 = coenzyme M-coenzyme B heterodisulfide + 2 formate + 2 oxidized [2Fe-2S]-[ferredoxin]. The protein operates within cofactor metabolism; coenzyme M-coenzyme B heterodisulfide reduction; coenzyme B and coenzyme M from coenzyme M-coenzyme B heterodisulfide: step 1/1. In terms of biological role, part of a complex that catalyzes the reversible reduction of CoM-S-S-CoB to the thiol-coenzymes H-S-CoM (coenzyme M) and H-S-CoB (coenzyme B). In Methanococcus maripaludis (strain DSM 14266 / JCM 13030 / NBRC 101832 / S2 / LL), this protein is H(2)/formate:CoB-CoM heterodisulfide,ferredoxin reductase subunit C2.